The primary structure comprises 238 residues: Tritrans,polycis-undecaprenyl-diphosphate synthase (geranylgeranyl-diphosphate specific) (238 aa).

The active site involves Asp18. Asp18 serves as a coordination point for Mg(2+). Residues 19-22 and 64-66 each bind substrate; these read GNRR and STE. Asn67 (proton acceptor) is an active-site residue. Substrate is bound by residues Arg70, Arg187, and 193 to 195; that span reads RLS. Glu206 contacts Mg(2+).

This sequence belongs to the UPP synthase family. In terms of assembly, homodimer. It depends on Mg(2+) as a cofactor.

It carries out the reaction geranylgeranyl diphosphate + 7 isopentenyl diphosphate = tri-trans,hepta-cis-undecaprenyl diphosphate + 7 diphosphate. In terms of biological role, catalyzes the sequential condensation of isopentenyl diphosphate (IPP) with geranylgeranyl diphosphate (GGPP) to yield (2Z,6Z,10Z,14Z,18Z,22Z,26Z,30E,34E,38E)-undecaprenyl diphosphate (tritrans,heptacis-UPP). It is probably the precursor of glycosyl carrier lipids. The sequence is that of Tritrans,polycis-undecaprenyl-diphosphate synthase (geranylgeranyl-diphosphate specific) from Pyrobaculum aerophilum (strain ATCC 51768 / DSM 7523 / JCM 9630 / CIP 104966 / NBRC 100827 / IM2).